Reading from the N-terminus, the 466-residue chain is Cysteine--tRNA ligase (466 aa).

C29 contacts Zn(2+). Positions 31 to 41 match the 'HIGH' region motif; sequence PTVYNYIHIGN. Residues C209, H234, and E238 each coordinate Zn(2+). Residues 266–270 carry the 'KMSKS' region motif; that stretch reads KMSKS. K269 is an ATP binding site.

It belongs to the class-I aminoacyl-tRNA synthetase family. As to quaternary structure, monomer. It depends on Zn(2+) as a cofactor.

It localises to the cytoplasm. It carries out the reaction tRNA(Cys) + L-cysteine + ATP = L-cysteinyl-tRNA(Cys) + AMP + diphosphate. In Lysinibacillus sphaericus (strain C3-41), this protein is Cysteine--tRNA ligase.